The sequence spans 224 residues: EF-hand calcium-binding domain-containing protein 1 (224 aa).

The N-terminal stretch at 1–21 (MKVSLLLLALVLVCLVQGSES) is a signal peptide. The 36-residue stretch at 115–150 (IAHPDFMKAYSIADVDGDGELSPKEFYNGPYVFEMD) folds into the EF-hand domain. Ca(2+)-binding residues include D128, D130, D132, E134, and E139.

As to expression, component of the acid-soluble organic matrix of calcified layers of the shell (at protein level).

It localises to the secreted. The protein is EF-hand calcium-binding domain-containing protein 1 of Lottia gigantea (Giant owl limpet).